Here is a 334-residue protein sequence, read N- to C-terminus: Cytoskeleton protein RodZ (334 aa).

At 1–111 (MNTEATHDQN…LGKRRKKRDG (111 aa)) the chain is on the cytoplasmic side. Residues 19–71 (LRNAREQLGLSQQAVAERLCLKVSTVRDIEEDKAPSDLASTFLRGYIRSYARL) form the HTH cro/C1-type domain. The H-T-H motif DNA-binding region spans 30–49 (QQAVAERLCLKVSTVRDIEE). A helical; Signal-anchor for type II membrane protein transmembrane segment spans residues 112–132 (WLMSFTWLVLFVVVGLTGAWW). The Periplasmic portion of the chain corresponds to 133-334 (WQNHKAHQEE…TLNAEPTPAQ (202 aa)). A disordered region spans residues 152 to 210 (AGLNADKDSGQSVPLDTGAVTSQDTTPAQTAPAPATPVDSTAATQTPAPTAAATQNTVV). Polar residues predominate over residues 161–175 (GQSVPLDTGAVTSQD). A compositionally biased stretch (low complexity) spans 176–210 (TTPAQTAPAPATPVDSTAATQTPAPTAAATQNTVV).

The protein belongs to the RodZ family.

The protein localises to the cell inner membrane. Its function is as follows. Cytoskeletal protein that is involved in cell-shape control through regulation of the length of the long axis. The chain is Cytoskeleton protein RodZ from Salmonella gallinarum (strain 287/91 / NCTC 13346).